We begin with the raw amino-acid sequence, 100 residues long: UPF0213 protein YhbQ (100 aa).

In terms of domain architecture, GIY-YIG spans 2–77 (TPWFLYLIRT…KQLTKRQKER (76 aa)).

It belongs to the UPF0213 family.

The chain is UPF0213 protein YhbQ from Escherichia coli O81 (strain ED1a).